Here is a 345-residue protein sequence, read N- to C-terminus: MTDKTSLSYKDAGVDIDAGNALVGRIKGVVKKTRRPEVMGGLGGFGALCALPQKYREPVLVSGTDGVGTKLRLAMDLKRHDTIGIDLVAMCVNDLVVQGAEPLFFLDYYATGKLDVDTASAVISGIAEGCLQSGCSLVGGETAEMPGMYHGEDYDVAGFCVGVVEKSEIIDGSKVSDGDVLIALGSSGPHSNGYSLVRKILEVSGCDPQTTELDGKPLADHLLAPTRIYVKSVLELIEKVDVHAIAHLTGGGFWENIPRVLPDNTQAVIDESSWQWPEVFNWLQTAGNVERHEMYRTFNCGVGMIIALPAPEVDKALALLNANGENAWKIGIIKASDSEQRVVIE.

It belongs to the AIR synthase family.

Its subcellular location is the cytoplasm. The catalysed reaction is 2-formamido-N(1)-(5-O-phospho-beta-D-ribosyl)acetamidine + ATP = 5-amino-1-(5-phospho-beta-D-ribosyl)imidazole + ADP + phosphate + H(+). Its pathway is purine metabolism; IMP biosynthesis via de novo pathway; 5-amino-1-(5-phospho-D-ribosyl)imidazole from N(2)-formyl-N(1)-(5-phospho-D-ribosyl)glycinamide: step 2/2. The polypeptide is Phosphoribosylformylglycinamidine cyclo-ligase (Escherichia coli (strain 55989 / EAEC)).